Consider the following 384-residue polypeptide: Cysteine desulfurase (384 aa).

Residues 74-75, N154, Q180, and 200-202 each bind pyridoxal 5'-phosphate; these read GT and SGH. Residue K203 is modified to N6-(pyridoxal phosphate)lysine. Pyridoxal 5'-phosphate is bound at residue T238. The active-site Cysteine persulfide intermediate is C325. C325 provides a ligand contact to [2Fe-2S] cluster.

The protein belongs to the class-V pyridoxal-phosphate-dependent aminotransferase family. NifS/IscS subfamily. Homodimer. Pyridoxal 5'-phosphate is required as a cofactor.

The catalysed reaction is (sulfur carrier)-H + L-cysteine = (sulfur carrier)-SH + L-alanine. Functionally, catalyzes the removal of elemental sulfur atoms from cysteine to produce alanine. Seems to participate in the biosynthesis of the nitrogenase metalloclusters by providing the inorganic sulfur required for the Fe-S core formation. This chain is Cysteine desulfurase, found in Rhodobacter capsulatus (Rhodopseudomonas capsulata).